The sequence spans 212 residues: ER lumen protein-retaining receptor 2 (212 aa).

The Lumenal portion of the chain corresponds to 1–4 (MNVF). Residues 5–24 (RLSGDLSHLAAIIILLLKIW) traverse the membrane as a helical segment. Residues 25-32 (KSRSCAGI) are Cytoplasmic-facing. Residues 33–52 (SGKSQLLFALVFTTRYLDLL) traverse the membrane as a helical segment. An interaction with the K-D-E-L motif on target proteins region spans residues 47 to 48 (RY). Residues 53–58 (TSFISL) lie on the Lumenal side of the membrane. Residues 59–79 (YNTSMKVIYIGCAYATVYLIY) form a helical membrane-spanning segment. The Cytoplasmic segment spans residues 80-92 (MKFKATYDGNHDT). The helical transmembrane segment at 93-110 (FRVEFLVVPVGGLSVLVN) threads the bilayer. Residues 111–116 (HDFSPL) are Lumenal-facing. Residues 117–135 (EILWTFSIYLESVAILPQL) traverse the membrane as a helical segment. At 136 to 149 (FMISKTGEAETITT) the chain is on the cytoplasmic side. Residues 150-168 (HYLFFLGLYRALYLFNWIW) traverse the membrane as a helical segment. Residues 159–169 (RALYLFNWIWR) are interaction with the K-D-E-L motif on target proteins. Residues 169-178 (RYSFEGFFDL) lie on the Lumenal side of the membrane. A helical membrane pass occupies residues 179–199 (IAIVAGVVQTILYCDFFYLYV). Residues 200–212 (TKVLKGKKLSLPA) lie on the Cytoplasmic side of the membrane. Residues 204 to 207 (KGKK) form an important for recycling of cargo proteins with the sequence motif K-D-E-L from the Golgi to the endoplasmic reticulum region.

This sequence belongs to the ERD2 family.

Its subcellular location is the endoplasmic reticulum membrane. The protein resides in the golgi apparatus membrane. The protein localises to the cytoplasmic vesicle. It localises to the COPI-coated vesicle membrane. In terms of biological role, receptor for the C-terminal sequence motif K-D-E-L that is present on endoplasmic reticulum resident proteins and that mediates their recycling from the Golgi back to the endoplasmic reticulum. Binding is pH dependent, and is optimal at pH 5-5.4. The protein is ER lumen protein-retaining receptor 2 (kdelr2) of Xenopus tropicalis (Western clawed frog).